Reading from the N-terminus, the 150-residue chain is MRVVIQRVSHASVTIDGHCKSAIQKGMMILVGIEETDSREDIDWLCKKIVNLRIFDDENGVMNKSILEDEGNILVISQFTLHASTKKGNRPSYIKAAKPEISIPLYEQFCKDLSCALGKEVKTGEFGADMKVELLNDGPVTICIDTKNKE.

Residues 138-139 (GP) carry the Gly-cisPro motif, important for rejection of L-amino acids motif.

Belongs to the DTD family. As to quaternary structure, homodimer.

It localises to the cytoplasm. The catalysed reaction is glycyl-tRNA(Ala) + H2O = tRNA(Ala) + glycine + H(+). The enzyme catalyses a D-aminoacyl-tRNA + H2O = a tRNA + a D-alpha-amino acid + H(+). Its function is as follows. An aminoacyl-tRNA editing enzyme that deacylates mischarged D-aminoacyl-tRNAs. Also deacylates mischarged glycyl-tRNA(Ala), protecting cells against glycine mischarging by AlaRS. Acts via tRNA-based rather than protein-based catalysis; rejects L-amino acids rather than detecting D-amino acids in the active site. By recycling D-aminoacyl-tRNA to D-amino acids and free tRNA molecules, this enzyme counteracts the toxicity associated with the formation of D-aminoacyl-tRNA entities in vivo and helps enforce protein L-homochirality. This chain is D-aminoacyl-tRNA deacylase, found in Bacteroides fragilis (strain YCH46).